Here is a 442-residue protein sequence, read N- to C-terminus: Transducin beta-like protein 2 (442 aa).

The segment at 36–71 (EKPSQPVCQKENEPKKSGSKKQKQNQRVRKEKPQQH) is disordered. Positions 52 to 65 (SGSKKQKQNQRVRK) are enriched in basic residues. 7 WD repeats span residues 84–123 (SHSGNISCMDFSSNGKYLATCADDRTVRIWSTKDFLQREH), 130–170 (VELD…DGGF), 182–222 (KHKA…STIN), 224–263 (NQMNNSHAVISPCSRFVGSCGFTPDVKVWEVCFGKKGEFQ), 273–312 (GHSASVHSFAFSNDSRRMASVSKDGTWKLWDTDVEYKKQQ), 323–362 (EEASTMPCRLALSPDTHVLALATGTNIHLFNTRRGEKEEY), and 366–404 (VHGECIADLTFDITGRFLASCGDRAVRLFHNTPGHRAVV). Residue Lys164 forms a Glycyl lysine isopeptide (Lys-Gly) (interchain with G-Cter in SUMO2) linkage. Thr428 carries the post-translational modification Phosphothreonine.

In Mus musculus (Mouse), this protein is Transducin beta-like protein 2 (Tbl2).